Consider the following 90-residue polypeptide: uncharacterized protein (90 aa).

Residue K88 forms an Isoglutamyl lysine isopeptide (Lys-Gln) (interchain with Q-Cter in protein Pup) linkage.

This is an uncharacterized protein from Mycolicibacterium smegmatis (strain ATCC 700084 / mc(2)155) (Mycobacterium smegmatis).